Here is a 440-residue protein sequence, read N- to C-terminus: Tetratricopeptide repeat protein 5 (440 aa).

TPR repeat units lie at residues 7–61 (EEVK…EEVV), 68–98 (AQVL…AVKL), 103–130 (VEAW…SGAL), 136–174 (KVSL…AVQM), and 179–216 (GRSW…AEKV). Positions 13 to 24 (LQKLQELVDQLY) match the Nuclear export signal motif. Phosphoserine; by ATM is present on serine 203. Serine 221 is subject to Phosphoserine; by CHEK2. The TPR 6 repeat unit spans residues 224-253 (PDLHLNRATLHKYEESYGEALEGFSRAAAL). A mediates interaction with 28S rRNA of ribosome-coding tubulin region spans residues 285-287 (KTK).

Interacts with JMY and p300/EP300; the interaction occurs in the nucleus and augments the association between JMY and p300/EP300 in response to DNA damage. Forms a complex with HSF1 and p300/EP300; these interactions augment chromatin-bound HSF1 and p300/EP300 histone acetyltransferase activity, resulting in enhanced heat-shock-responsive transcription. Interacts with PRMT5; the interaction is DNA damage-dependent and promotes PRMT5 interaction with p53/TP53 and subsequent methylation. Interacts with JMY; the interaction occurs in the cytoplasm and results in the inhibition of JYM's nucleation activity. Interacts with ribosome-coding tubulin (via 60S subunit 28S rRNA and protein uL24/RPL26) and the N-terminal of nascent tubulin polypeptide (via alpha-tubulin MREC motif and beta-tubulin MREI motif); these interactions result in tubulin mRNA-targeted degradation. Interacts with ATP5F1B; the interaction occurs in the mitochondria and results in ATP production decrease. Interacts with p53/TP53; the interaction occurs in the mitochondria and results in increased apoptosis. Post-translationally, phosphorylation by ATM kinase induces nuclear accumulation while interfering with nuclear export, and phosphorylation by CHEK2 kinase enhances nuclear stability.

It localises to the nucleus. It is found in the cytoplasm. Its subcellular location is the cytoplasmic vesicle. The protein resides in the mitochondrion matrix. In terms of biological role, cofactor involved in the regulation of various cellular mechanisms such as actin regulation, autophagy, chromatin regulation and DNA repair. In non-stress conditions, interacts with cofactor JMY in the cytoplasm which prevents JMY's actin nucleation activity and ability to activate the Arp2/3 complex. Acts as a negative regulator of nutrient stress-induced autophagy by preventing JMY's interaction with MAP1LC3B, thereby preventing autophagosome formation. Involves in tubulin autoregulation by promoting its degradation in response to excess soluble tubulin. To do so, associates with the active ribosome near the ribosome exit tunnel and with nascent tubulin polypeptides early during their translation, triggering tubulin mRNA-targeted degradation. Following DNA damage, phosphorylated by DNA damage responsive protein kinases ATM and CHEK2, leading to its nuclear accumulation and stability. Nuclear TTC5/STRAP promotes the assembly of a stress-responsive p53/TP53 coactivator complex, which includes the coactivators JMY and p300, thereby increasing p53/TP53-dependent transcription and apoptosis. Also recruits arginine methyltransferase PRMT5 to p53/TP53 when DNA is damaged, allowing PRMT5 to methylate p53/TP53. In DNA stress conditions, also prevents p53/TP53 degradation by E3 ubiquitin ligase MDM2. Upon heat-shock stress, forms a chromatin-associated complex with heat-shock factor 1 HSF1 and p300/EP300 to stimulate heat-shock-responsive transcription, thereby increasing cell survival. Mitochondrial TTC5/STRAP interacts with ATP synthase subunit beta ATP5F1B which decreased ATP synthase activity and lowers mitochondrial ATP production, thereby regulating cellular respiration and mitochondrial-dependent apoptosis. Mitochondrial TTC5/STRAP also regulates p53/TP53-mediated apoptosis. This chain is Tetratricopeptide repeat protein 5, found in Homo sapiens (Human).